The sequence spans 31 residues: Cytochrome b6-f complex subunit 6 (31 aa).

A helical membrane pass occupies residues 4–24; sequence VISYFGFLLVALAFTLVTYLG.

The protein belongs to the PetL family. As to quaternary structure, the 4 large subunits of the cytochrome b6-f complex are cytochrome b6, subunit IV (17 kDa polypeptide, PetD), cytochrome f and the Rieske protein, while the 4 small subunits are PetG, PetL, PetM and PetN. The complex functions as a dimer.

The protein localises to the plastid. The protein resides in the chloroplast thylakoid membrane. In terms of biological role, component of the cytochrome b6-f complex, which mediates electron transfer between photosystem II (PSII) and photosystem I (PSI), cyclic electron flow around PSI, and state transitions. PetL is important for photoautotrophic growth as well as for electron transfer efficiency and stability of the cytochrome b6-f complex. The protein is Cytochrome b6-f complex subunit 6 of Nephroselmis olivacea (Green alga).